Reading from the N-terminus, the 570-residue chain is Adenine deaminase 2 (570 aa).

Belongs to the metallo-dependent hydrolases superfamily. Adenine deaminase family. Mn(2+) is required as a cofactor.

It catalyses the reaction adenine + H2O + H(+) = hypoxanthine + NH4(+). This chain is Adenine deaminase 2, found in Carboxydothermus hydrogenoformans (strain ATCC BAA-161 / DSM 6008 / Z-2901).